Here is a 76-residue protein sequence, read N- to C-terminus: CLAVATA3/ESR (CLE)-related protein 46 (76 aa).

A signal peptide spans 1-26; sequence MRRHDIIIKLLLLMCLLLSRFVTREC. The interval 53-76 is disordered; it reads EEKKWHKHPSGPNPTGNRHPPVKH. A hydroxyproline mark is found at proline 61 and proline 64. The O-linked (Ara...) hydroxyproline glycan is linked to proline 64.

It belongs to the CLV3/ESR signal peptide family. In terms of processing, the O-glycosylation (arabinosylation) of the hydroxyproline Pro-64 enhances binding affinity of the CLE46p peptide for its receptor.

Its subcellular location is the secreted. The protein resides in the extracellular space. Functionally, extracellular signal peptide that regulates cell fate. This chain is CLAVATA3/ESR (CLE)-related protein 46, found in Arabidopsis thaliana (Mouse-ear cress).